The primary structure comprises 84 residues: Envelope glycoprotein N (84 aa).

Positions 1–26 (MSCKKGARQRLYVSLWLFYILVFAAA) are cleaved as a signal peptide. Over 27 to 45 (TEMDFYSSECHSHTYEIVL) the chain is Virion surface. A helical transmembrane segment spans residues 46–66 (NSFSSIWLLINLFLLLCSFAI). At 67-84 (FLKYWCYKTFASETVKGY) the chain is on the intravirion side.

Belongs to the herpesviridae glycoprotein N family. Interacts (via N-terminus) with gM (via N-terminus). The gM-gN heterodimer forms the gCII complex.

The protein localises to the virion membrane. It is found in the host membrane. The protein resides in the host Golgi apparatus. It localises to the host trans-Golgi network. Envelope glycoprotein necessary for proper maturation of gM and modulation of its membrane fusion activity. Also plays a critical role in virion morphogenesis. The protein is Envelope glycoprotein N of Human herpesvirus 6B (strain Z29) (HHV-6 variant B).